The chain runs to 320 residues: Lipoyl synthase (320 aa).

Residues cysteine 67, cysteine 72, cysteine 78, cysteine 93, cysteine 97, cysteine 100, and serine 307 each contribute to the [4Fe-4S] cluster site. One can recognise a Radical SAM core domain in the interval 79-296 (FNHGTATFMI…REKAAEMGFE (218 aa)).

Belongs to the radical SAM superfamily. Lipoyl synthase family. [4Fe-4S] cluster is required as a cofactor.

The protein resides in the cytoplasm. It catalyses the reaction [[Fe-S] cluster scaffold protein carrying a second [4Fe-4S](2+) cluster] + N(6)-octanoyl-L-lysyl-[protein] + 2 oxidized [2Fe-2S]-[ferredoxin] + 2 S-adenosyl-L-methionine + 4 H(+) = [[Fe-S] cluster scaffold protein] + N(6)-[(R)-dihydrolipoyl]-L-lysyl-[protein] + 4 Fe(3+) + 2 hydrogen sulfide + 2 5'-deoxyadenosine + 2 L-methionine + 2 reduced [2Fe-2S]-[ferredoxin]. Its pathway is protein modification; protein lipoylation via endogenous pathway; protein N(6)-(lipoyl)lysine from octanoyl-[acyl-carrier-protein]: step 2/2. In terms of biological role, catalyzes the radical-mediated insertion of two sulfur atoms into the C-6 and C-8 positions of the octanoyl moiety bound to the lipoyl domains of lipoate-dependent enzymes, thereby converting the octanoylated domains into lipoylated derivatives. The protein is Lipoyl synthase of Actinobacillus succinogenes (strain ATCC 55618 / DSM 22257 / CCUG 43843 / 130Z).